Reading from the N-terminus, the 219-residue chain is Protoglabretal synthase ISM2 (219 aa).

The next 5 membrane-spanning stretches (helical) occupy residues 26-46 (VHAW…VLAG), 59-79 (LMIW…YWLF), 112-132 (AVVG…LFAV), 144-164 (ILQL…FITA), and 178-198 (YYKY…LIII). Residues 55–197 (TDKWLMIWWA…TWLLFPALII (143 aa)) enclose the EXPERA domain.

Belongs to the EBP family.

The protein localises to the membrane. It catalyses the reaction 7,8-epoxymelianol = protoglabretal. It functions in the pathway secondary metabolite biosynthesis; terpenoid biosynthesis. In terms of biological role, isomerase involved in the biosynthesis of glabretanes triterpene natural products such as glabretal, a component with in vitro antiproliferative properties on lymphocytes. Catalyzes the conversion of 7,8-epoxymelianol to protoglabretal via skeletal rearrangements. This chain is Protoglabretal synthase ISM2, found in Ailanthus altissima (Tree-of-heaven).